The sequence spans 338 residues: Tetraacyldisaccharide 4'-kinase (338 aa).

Residue 53–60 (TVGGSGKT) participates in ATP binding.

The protein belongs to the LpxK family.

The enzyme catalyses a lipid A disaccharide + ATP = a lipid IVA + ADP + H(+). The protein operates within glycolipid biosynthesis; lipid IV(A) biosynthesis; lipid IV(A) from (3R)-3-hydroxytetradecanoyl-[acyl-carrier-protein] and UDP-N-acetyl-alpha-D-glucosamine: step 6/6. Functionally, transfers the gamma-phosphate of ATP to the 4'-position of a tetraacyldisaccharide 1-phosphate intermediate (termed DS-1-P) to form tetraacyldisaccharide 1,4'-bis-phosphate (lipid IVA). The chain is Tetraacyldisaccharide 4'-kinase from Azorhizobium caulinodans (strain ATCC 43989 / DSM 5975 / JCM 20966 / LMG 6465 / NBRC 14845 / NCIMB 13405 / ORS 571).